Consider the following 395-residue polypeptide: Protein BTN1 (395 aa).

The first 31 residues, Met1 to Ala31, serve as a signal peptide directing secretion. 10 helical membrane passes run Val43–Ile63, Leu74–Leu94, Leu96–Leu116, Gly134–Val154, Leu158–Pro178, Pro222–Asn242, Phe261–Ile278, Ile291–Ser311, Ile313–Ala333, and Leu355–Trp375.

This sequence belongs to the battenin family.

The protein localises to the vacuole membrane. In terms of biological role, involved in vacuolar transport and vacuole pH homeostasis. Also required for cytokinesis. The protein is Protein BTN1 (BTN1) of Yarrowia lipolytica (strain CLIB 122 / E 150) (Yeast).